A 222-amino-acid polypeptide reads, in one-letter code: Glutathione S-transferase A1 (222 aa).

Methionine 1 carries the N-acetylmethionine modification. N-acetylalanine; in Glutathione S-transferase A1, N-terminally processed is present on alanine 2. The GST N-terminal domain maps to 3–83 (GKPTLHYFNG…YIATKYNLYG (81 aa)). An N6-succinyllysine modification is found at lysine 4. Glutathione is bound by residues tyrosine 9, lysine 45, 54-55 (QV), and 67-68 (QT). The 124-residue stretch at 85-208 (DMKERALIDM…QPGSQRKPPT (124 aa)) folds into the GST C-terminal domain.

The protein belongs to the GST superfamily. Alpha family. As to quaternary structure, homodimer or heterodimer of GSTA1 and GSTA2. As to expression, expressed in corpus luteum, adrenal gland, testis, liver, lung, thyroid and kidney.

It is found in the cytoplasm. It catalyses the reaction RX + glutathione = an S-substituted glutathione + a halide anion + H(+). The catalysed reaction is prostaglandin A2 + glutathione = prostaglandin A2-S-(R)-glutathione. It carries out the reaction prostaglandin J2 + glutathione = prostaglandin J2-S-(R)-glutathione. The enzyme catalyses (13S)-hydroperoxy-(9Z,11E)-octadecadienoate + 2 glutathione = (13S)-hydroxy-(9Z,11E)-octadecadienoate + glutathione disulfide + H2O. It catalyses the reaction androst-5-ene-3,17-dione = androst-4-ene-3,17-dione. Its function is as follows. Glutathione S-transferase that catalyzes the nucleophilic attack of the sulfur atom of glutathione on the electrophilic groups of a wide range of exogenous and endogenous compounds. Involved in the formation of glutathione conjugates of both prostaglandin A2 (PGA2) and prostaglandin J2 (PGJ2). It also catalyzes the isomerization of D5-androstene-3,17-dione (AD) into D4-androstene-3,17-dione and may therefore play an important role in hormone biosynthesis. Through its glutathione-dependent peroxidase activity toward the fatty acid hydroperoxide (13S)-hydroperoxy-(9Z,11E)-octadecadienoate/13-HPODE it is also involved in the metabolism of oxidized linoleic acid. The chain is Glutathione S-transferase A1 (GSTA1) from Bos taurus (Bovine).